A 184-amino-acid chain; its full sequence is MSRAWYVVQTYSQYEKKIEQDIRLLINEGVFGGVVLDVKAPIEKVEEIRNGKKRIRERKIWPGYILIELDLPEVGWKDIIANIIKVQGVINFVGVSKGQRPIPINDEEVKSVFMLTGEIKANKSIFMLYDFEEGERVRIKGGPFDSFEGLISSIDYERKKLKVAVQIFGRSTPVEVDFQHIEKI.

It belongs to the NusG family.

Functionally, participates in transcription elongation, termination and antitermination. This is Transcription termination/antitermination protein NusG from Borreliella burgdorferi (strain ATCC 35210 / DSM 4680 / CIP 102532 / B31) (Borrelia burgdorferi).